Reading from the N-terminus, the 331-residue chain is Beta-hexosaminidase (331 aa).

Residues D60, R68, R133, and 163–164 contribute to the substrate site; that span reads KH. The active-site Proton donor/acceptor is the H176. Residue D247 is the Nucleophile of the active site.

The protein belongs to the glycosyl hydrolase 3 family. NagZ subfamily.

It is found in the cytoplasm. The catalysed reaction is Hydrolysis of terminal non-reducing N-acetyl-D-hexosamine residues in N-acetyl-beta-D-hexosaminides.. The protein operates within cell wall biogenesis; peptidoglycan recycling. Its function is as follows. Plays a role in peptidoglycan recycling by cleaving the terminal beta-1,4-linked N-acetylglucosamine (GlcNAc) from peptide-linked peptidoglycan fragments, giving rise to free GlcNAc, anhydro-N-acetylmuramic acid and anhydro-N-acetylmuramic acid-linked peptides. In Xanthomonas campestris pv. campestris (strain B100), this protein is Beta-hexosaminidase.